A 361-amino-acid chain; its full sequence is G-protein coupled receptor 183 (361 aa).

Residues 1–31 (MDIQMANNFTPPSATPQGNDCDLYAHHSTAR) lie on the Extracellular side of the membrane. The helical transmembrane segment at 32–57 (IVMPLHYSLVFIIGLVGNLLALVVIV) threads the bilayer. The Cytoplasmic segment spans residues 58-77 (QNRKKINSTTLYSTNLVISD). A helical transmembrane segment spans residues 78–95 (ILFTTALPTRIAYYAMGF). Arg-87 is a 7alpha,25-dihydroxycholesterol binding site. The Extracellular portion of the chain corresponds to 96–105 (DWRIGDALCR). Cys-104 and Cys-181 are joined by a disulfide. The chain crosses the membrane as a helical span at residues 106-127 (ITALVFYINTYAGVNFMTCLSI). 2 residues coordinate 7alpha,25-dihydroxycholesterol: Tyr-112 and Tyr-116. The tract at residues 126-134 (SIDRFIAVV) is interaction with G proteins. At 128-149 (DRFIAVVHPLRYNKIKRIEHAK) the chain is on the cytoplasmic side. Residues 150 to 168 (GVCIFVWILVFAQTLPLLI) traverse the membrane as a helical segment. Residues 169 to 192 (NPMSKQEAERITCMEYPNFEETKS) are Extracellular-facing. A helical transmembrane segment spans residues 193–215 (LPWILLGACFIGYVLPLIIILIC). Residues 216–241 (YSQICCKLFRTAKQNPLTEKSGVNKK) lie on the Cytoplasmic side of the membrane. Residues 242-265 (ALNTIILIIVVFVLCFTPYHVAII) form a helical membrane-spanning segment. Residue Tyr-260 participates in 7alpha,25-dihydroxycholesterol binding. Over 266-287 (QHMIKKLRFSNFLECSQRHSFQ) the chain is Extracellular. The chain crosses the membrane as a helical span at residues 288–312 (ISLHFTVCLMNFNCCMDPFIYFFAC). Topologically, residues 313 to 361 (KGYKRKVMRMLKRQVSVSISSAVKSAPEENSREMTETQMMIHSKSSNGK) are cytoplasmic. Position 328 is a phosphoserine (Ser-328). Positions 340-361 (EENSREMTETQMMIHSKSSNGK) are disordered. Over residues 348–361 (ETQMMIHSKSSNGK) the composition is skewed to polar residues.

Belongs to the G-protein coupled receptor 1 family. Homodimer and heterodimer. Heterodimerizes with CXCR5; leading to modulate the interaction between of CXCL13 and CXCR5. As to expression, expressed abundantly in lymphoid tissues such as spleen and lymph node, and in B- and T-lymphocytes. Also highly expressed in lung, heart and gastrointestinal tract, and weakly expressed in the urogenital system and brain. Expressed in astrocytes.

It is found in the cell membrane. Its function is as follows. G-protein coupled receptor expressed in lymphocytes that acts as a chemotactic receptor for B-cells, T-cells, splenic dendritic cells, monocytes/macrophages and astrocytes. Receptor for oxysterol 7-alpha,25-dihydroxycholesterol (7-alpha,25-OHC) and other related oxysterols. Mediates cell positioning and movement of a number of cells by binding the 7-alpha,25-OHC ligand that forms a chemotactic gradient. Binding of 7-alpha,25-OHC mediates the correct localization of B-cells during humoral immune responses. Guides B-cell movement along the B-cell zone-T-cell zone boundary and later to interfollicular and outer follicular regions. Its specific expression during B-cell maturation helps position B-cells appropriately for mounting T-dependent antibody responses. Collaborates with CXCR5 to mediate B-cell migration; probably by forming a heterodimer with CXCR5 that affects the interaction between of CXCL13 and CXCR5. Also acts as a chemotactic receptor for some T-cells upon binding to 7-alpha,25-OHC ligand. Promotes follicular helper T (Tfh) cells differentiation by positioning activated T-cells at the follicle-T-zone interface, promoting contact of newly activated CD4 T-cells with activated dendritic cells and exposing them to Tfh-cell-promoting inducible costimulator (ICOS) ligand. Expression in splenic dendritic cells is required for their homeostasis, localization and ability to induce B- and T-cell responses: GPR183 acts as a chemotactic receptor in dendritic cells that mediates the accumulation of CD4(+) dendritic cells in bridging channels. Regulates migration of astrocytes and is involved in communication between astrocytes and macrophages. Promotes osteoclast precursor migration to bone surfaces. Signals constitutively through G(i)-alpha, but not G(s)-alpha or G(q)-alpha. Signals constitutively also via MAPK1/3 (ERK1/2). This chain is G-protein coupled receptor 183, found in Homo sapiens (Human).